The following is an 882-amino-acid chain: DNA mismatch repair protein MutS (882 aa).

635 to 642 is a binding site for ATP; sequence GPNMGGKS.

The protein belongs to the DNA mismatch repair MutS family.

Its function is as follows. This protein is involved in the repair of mismatches in DNA. It is possible that it carries out the mismatch recognition step. This protein has a weak ATPase activity. The sequence is that of DNA mismatch repair protein MutS from Janthinobacterium sp. (strain Marseille) (Minibacterium massiliensis).